We begin with the raw amino-acid sequence, 270 residues long: Homeobox protein Hox-D12 (270 aa).

The interval 102–122 (APEAAAGPEERGRTRPSFAPE) is disordered. The homeobox DNA-binding region spans 202-261 (ARKKRKPYTKQQIAELENEFLVNEFINRQKRKELSNRLNLSDQQVKIWFQNRRMKKKRVV).

The protein belongs to the Abd-B homeobox family.

The protein localises to the nucleus. Sequence-specific transcription factor which is part of a developmental regulatory system that provides cells with specific positional identities on the anterior-posterior axis. The chain is Homeobox protein Hox-D12 (HOXD12) from Homo sapiens (Human).